The sequence spans 144 residues: Mediator of RNA polymerase II transcription subunit 9 (144 aa).

Residues 85 to 143 are a coiled coil; that stretch reads QDCNHKIFELQKRFESAREQIRQLPGIDFNKEEQQQRLELLRNQLKLKQQLIRKYKDTE.

Belongs to the Mediator complex subunit 9 family. In terms of assembly, component of the Mediator complex.

Its subcellular location is the nucleus. Its function is as follows. Component of the Mediator complex, a coactivator involved in the regulated transcription of nearly all RNA polymerase II-dependent genes. Mediator functions as a bridge to convey information from gene-specific regulatory proteins to the basal RNA polymerase II transcription machinery. Mediator is recruited to promoters by direct interactions with regulatory proteins and serves as a scaffold for the assembly of a functional preinitiation complex with RNA polymerase II and the general transcription factors. This chain is Mediator of RNA polymerase II transcription subunit 9 (MED9), found in Drosophila melanogaster (Fruit fly).